Reading from the N-terminus, the 181-residue chain is Acireductone dioxygenase (181 aa).

Fe(2+)-binding residues include histidine 98, histidine 100, glutamate 104, and histidine 142. Ni(2+) contacts are provided by histidine 98, histidine 100, glutamate 104, and histidine 142.

This sequence belongs to the acireductone dioxygenase (ARD) family. As to quaternary structure, monomer. Requires Fe(2+) as cofactor. It depends on Ni(2+) as a cofactor.

The catalysed reaction is 1,2-dihydroxy-5-(methylsulfanyl)pent-1-en-3-one + O2 = 3-(methylsulfanyl)propanoate + CO + formate + 2 H(+). The enzyme catalyses 1,2-dihydroxy-5-(methylsulfanyl)pent-1-en-3-one + O2 = 4-methylsulfanyl-2-oxobutanoate + formate + 2 H(+). It participates in amino-acid biosynthesis; L-methionine biosynthesis via salvage pathway; L-methionine from S-methyl-5-thio-alpha-D-ribose 1-phosphate: step 5/6. Catalyzes 2 different reactions between oxygen and the acireductone 1,2-dihydroxy-3-keto-5-methylthiopentene (DHK-MTPene) depending upon the metal bound in the active site. Fe-containing acireductone dioxygenase (Fe-ARD) produces formate and 2-keto-4-methylthiobutyrate (KMTB), the alpha-ketoacid precursor of methionine in the methionine recycle pathway. Ni-containing acireductone dioxygenase (Ni-ARD) produces methylthiopropionate, carbon monoxide and formate, and does not lie on the methionine recycle pathway. This Synechococcus sp. (strain ATCC 27144 / PCC 6301 / SAUG 1402/1) (Anacystis nidulans) protein is Acireductone dioxygenase.